Consider the following 706-residue polypeptide: ATP-dependent DNA helicase HMI1, mitochondrial (706 aa).

One can recognise a UvrD-like helicase ATP-binding domain in the interval 5 to 277 (TPSQWKVINK…LKLFDNFRST (273 aa)). ATP contacts are provided by residues 29-34 (GSGKTL) and arginine 275. In terms of domain architecture, UvrD-like helicase C-terminal spans 278–593 (PEIISLASKI…KLSTIHSAKG (316 aa)). The propeptide at 693–706 (YSSLRGCKSVFRRI) is cleaved upon import into mitochondrion.

Belongs to the helicase family. UvrD subfamily. Mg(2+) serves as cofactor.

The protein localises to the mitochondrion inner membrane. The enzyme catalyses Couples ATP hydrolysis with the unwinding of duplex DNA by translocating in the 3'-5' direction.. It catalyses the reaction ATP + H2O = ADP + phosphate + H(+). In terms of biological role, required for mitochondrial genome maintenance and mitochondrial DNA inheritance. This chain is ATP-dependent DNA helicase HMI1, mitochondrial (HMI1), found in Saccharomyces cerevisiae (strain ATCC 204508 / S288c) (Baker's yeast).